A 178-amino-acid polypeptide reads, in one-letter code: Protein GrpE (178 aa).

The interval 1 to 26 (MQDQDKYAEQAASMEEPASADAPAIV) is disordered.

This sequence belongs to the GrpE family. In terms of assembly, homodimer.

The protein resides in the cytoplasm. Its function is as follows. Participates actively in the response to hyperosmotic and heat shock by preventing the aggregation of stress-denatured proteins, in association with DnaK and GrpE. It is the nucleotide exchange factor for DnaK and may function as a thermosensor. Unfolded proteins bind initially to DnaJ; upon interaction with the DnaJ-bound protein, DnaK hydrolyzes its bound ATP, resulting in the formation of a stable complex. GrpE releases ADP from DnaK; ATP binding to DnaK triggers the release of the substrate protein, thus completing the reaction cycle. Several rounds of ATP-dependent interactions between DnaJ, DnaK and GrpE are required for fully efficient folding. In Herminiimonas arsenicoxydans, this protein is Protein GrpE.